The sequence spans 645 residues: Acetyl-coenzyme A synthetase (645 aa).

CoA contacts are provided by residues 190-193 (RGGR) and Thr-309. Residues 385–387 (GEP), 409–414 (DTWWQT), Asp-498, and Arg-513 contribute to the ATP site. A CoA-binding site is contributed by Ser-521. Residue Arg-524 coordinates ATP. 3 residues coordinate Mg(2+): Val-535, His-537, and Val-540. Residue Arg-582 participates in CoA binding. At Lys-607 the chain carries N6-acetyllysine.

Belongs to the ATP-dependent AMP-binding enzyme family. Mg(2+) serves as cofactor. Post-translationally, acetylated. Deacetylation by the SIR2-homolog deacetylase activates the enzyme.

The catalysed reaction is acetate + ATP + CoA = acetyl-CoA + AMP + diphosphate. Functionally, catalyzes the conversion of acetate into acetyl-CoA (AcCoA), an essential intermediate at the junction of anabolic and catabolic pathways. AcsA undergoes a two-step reaction. In the first half reaction, AcsA combines acetate with ATP to form acetyl-adenylate (AcAMP) intermediate. In the second half reaction, it can then transfer the acetyl group from AcAMP to the sulfhydryl group of CoA, forming the product AcCoA. This Methylocella silvestris (strain DSM 15510 / CIP 108128 / LMG 27833 / NCIMB 13906 / BL2) protein is Acetyl-coenzyme A synthetase.